The chain runs to 105 residues: RxLR effector protein PITG_18670 (105 aa).

Positions 1–21 are cleaved as a signal peptide; it reads MRSIFYFALAFAALTCSNASA. Positions 39–57 match the RxLR-dEER motif; it reads RSLRVAGQEVARGDRGEEI.

Belongs to the RxLR effector family.

It localises to the secreted. It is found in the host nucleus. The protein resides in the host nucleolus. The protein localises to the host cytoplasm. Its function is as follows. Effector that enhances P.infestans colonization of Nicotiana benthamiana leaves. The polypeptide is RxLR effector protein PITG_18670 (Phytophthora infestans (strain T30-4) (Potato late blight agent)).